Consider the following 248-residue polypeptide: 3-deoxy-manno-octulosonate cytidylyltransferase (248 aa).

Belongs to the KdsB family.

Its subcellular location is the cytoplasm. It catalyses the reaction 3-deoxy-alpha-D-manno-oct-2-ulosonate + CTP = CMP-3-deoxy-beta-D-manno-octulosonate + diphosphate. Its pathway is nucleotide-sugar biosynthesis; CMP-3-deoxy-D-manno-octulosonate biosynthesis; CMP-3-deoxy-D-manno-octulosonate from 3-deoxy-D-manno-octulosonate and CTP: step 1/1. It functions in the pathway bacterial outer membrane biogenesis; lipopolysaccharide biosynthesis. Functionally, activates KDO (a required 8-carbon sugar) for incorporation into bacterial lipopolysaccharide in Gram-negative bacteria. This Photobacterium profundum (strain SS9) protein is 3-deoxy-manno-octulosonate cytidylyltransferase.